A 394-amino-acid polypeptide reads, in one-letter code: L-lactate dehydrogenase (394 aa).

One can recognise an FMN hydroxy acid dehydrogenase domain in the interval 1–380 (MIISAASDYR…SRDSLVQNAE (380 aa)). Residue Tyr-24 participates in substrate binding. Residues Ser-106 and Gln-127 each contribute to the FMN site. Substrate is bound at residue Tyr-129. Thr-155 lines the FMN pocket. Residue Arg-164 participates in substrate binding. Lys-251 serves as a coordination point for FMN. Catalysis depends on His-275, which acts as the Proton acceptor. Arg-278 contributes to the substrate binding site. Residue 306 to 330 (DSGIRNGLDVVRMIALGADSVLLGR) coordinates FMN.

Belongs to the FMN-dependent alpha-hydroxy acid dehydrogenase family. The cofactor is FMN.

The protein resides in the cell inner membrane. It carries out the reaction (S)-lactate + A = pyruvate + AH2. In terms of biological role, catalyzes the conversion of L-lactate to pyruvate. Is coupled to the respiratory chain. The protein is L-lactate dehydrogenase of Klebsiella pneumoniae subsp. pneumoniae (strain ATCC 700721 / MGH 78578).